The primary structure comprises 205 residues: N-(5'-phosphoribosyl)anthranilate isomerase (205 aa).

Belongs to the TrpF family.

The enzyme catalyses N-(5-phospho-beta-D-ribosyl)anthranilate = 1-(2-carboxyphenylamino)-1-deoxy-D-ribulose 5-phosphate. It functions in the pathway amino-acid biosynthesis; L-tryptophan biosynthesis; L-tryptophan from chorismate: step 3/5. The protein is N-(5'-phosphoribosyl)anthranilate isomerase of Phocaeicola vulgatus (strain ATCC 8482 / DSM 1447 / JCM 5826 / CCUG 4940 / NBRC 14291 / NCTC 11154) (Bacteroides vulgatus).